The sequence spans 429 residues: Probable proton-coupled zinc antiporter SLC30A4 (429 aa).

Residues 1-113 (MAGSGAWKRL…ILKQRKVKAR (113 aa)) lie on the Cytoplasmic side of the membrane. Residues 114–134 (LTIAAVLYLLFMIGELVGGYI) form a helical membrane-spanning segment. Topologically, residues 135-143 (ANSLAIMTD) are lumenal. Residues 144-164 (ALHMLTDLSAIILTLLALWLS) traverse the membrane as a helical segment. Residues His-146 and Asp-150 each coordinate Zn(2+). At 165-178 (SKSPTKRFTFGFHR) the chain is on the cytoplasmic side. Residues 179-199 (LEVLSAMISVLLVYILMGFLL) form a helical membrane-spanning segment. Residues 200–216 (YEAVQRTIHMNYEINGD) lie on the Lumenal side of the membrane. Residues 217–237 (IMLITAAVGVAVNVIMGFLLN) traverse the membrane as a helical segment. The Cytoplasmic segment spans residues 238 to 274 (QSGHRHSHSHSLPSNSPTRGSGCERNHGQDSLAVRAA). The tract at residues 240 to 264 (GHRHSHSHSLPSNSPTRGSGCERNH) is zinc binding. The helical transmembrane segment at 275-295 (FVHALGDLVQSVGVLIAAYII) threads the bilayer. 2 residues coordinate Zn(2+): His-277 and Asp-281. Residues 296–310 (RFKPEYKIADPICTY) lie on the Lumenal side of the membrane. The helical transmembrane segment at 311-331 (VFSLLVAFTTFRIIWDTVVII) threads the bilayer. The Cytoplasmic segment spans residues 332 to 429 (LEGVPSHLNV…TCANCQSSSP (98 aa)).

It belongs to the cation diffusion facilitator (CDF) transporter (TC 2.A.4) family. SLC30A subfamily. As to quaternary structure, homodimer; dityrosine-linked. Homodimerization could be specific of the human protein and enhances the zinc transport efficiency. Interacts with TMEM163. Post-translationally, homodimerization through dityrosine bonds is stimulated by oxidative stress.

Its subcellular location is the endosome membrane. It localises to the late endosome membrane. It is found in the lysosome membrane. The catalysed reaction is Zn(2+)(in) + 2 H(+)(out) = Zn(2+)(out) + 2 H(+)(in). Functionally, probable proton-coupled zinc ion antiporter mediating zinc import from cytoplasm potentially into the endocytic compartment. Controls zinc deposition in milk. The polypeptide is Probable proton-coupled zinc antiporter SLC30A4 (Homo sapiens (Human)).